We begin with the raw amino-acid sequence, 553 residues long: Methionine--tRNA ligase (553 aa).

The 'HIGH' region signature appears at 12–22; it reads PYANSQLHLGH. Zn(2+) is bound by residues Cys-144, Cys-147, Cys-157, and Cys-160. A 'KMSKS' region motif is present at residues 332 to 336; that stretch reads KFSKS. Lys-335 contributes to the ATP binding site.

Belongs to the class-I aminoacyl-tRNA synthetase family. MetG type 1 subfamily. As to quaternary structure, monomer. The cofactor is Zn(2+).

It localises to the cytoplasm. The enzyme catalyses tRNA(Met) + L-methionine + ATP = L-methionyl-tRNA(Met) + AMP + diphosphate. Its function is as follows. Is required not only for elongation of protein synthesis but also for the initiation of all mRNA translation through initiator tRNA(fMet) aminoacylation. This Dehalococcoides mccartyi (strain ATCC BAA-2266 / KCTC 15142 / 195) (Dehalococcoides ethenogenes (strain 195)) protein is Methionine--tRNA ligase.